The following is a 478-amino-acid chain: Chromosomal replication initiator protein DnaA (478 aa).

The tract at residues 1 to 95 (MNKTLNPQEV…DVLEKEITEE (95 aa)) is domain I, interacts with DnaA modulators. The tract at residues 96–141 (INDLVQSMEEEDFALIDHTKPVIPNFFDQNTRVNFGGGPNNHHPTT) is domain II. Residues 142–358 (GVNPRFTFDN…GALLRIFALA (217 aa)) are domain III, AAA+ region. Residues Gly186, Gly188, Lys189, and Thr190 each coordinate ATP. Positions 359-478 (SFNKEEINMT…YKLTQFILRR (120 aa)) are domain IV, binds dsDNA.

It belongs to the DnaA family. Oligomerizes as a right-handed, spiral filament on DNA at oriC.

Its subcellular location is the cytoplasm. Plays an essential role in the initiation and regulation of chromosomal replication. ATP-DnaA binds to the origin of replication (oriC) to initiate formation of the DNA replication initiation complex once per cell cycle. Binds the DnaA box (a 9 base pair repeat at the origin) and separates the double-stranded (ds)DNA. Forms a right-handed helical filament on oriC DNA; dsDNA binds to the exterior of the filament while single-stranded (ss)DNA is stabiized in the filament's interior. The ATP-DnaA-oriC complex binds and stabilizes one strand of the AT-rich DNA unwinding element (DUE), permitting loading of DNA polymerase. After initiation quickly degrades to an ADP-DnaA complex that is not apt for DNA replication. Binds acidic phospholipids. The protein is Chromosomal replication initiator protein DnaA of Tropheryma whipplei (strain TW08/27) (Whipple's bacillus).